A 207-amino-acid polypeptide reads, in one-letter code: ATP-dependent Clp protease proteolytic subunit (207 aa).

Positions 1 to 14 (MSYSGERDNLAPHM) are excised as a propeptide. The Nucleophile role is filled by Ser-111. His-136 is an active-site residue.

The protein belongs to the peptidase S14 family. Fourteen ClpP subunits assemble into 2 heptameric rings which stack back to back to give a disk-like structure with a central cavity, resembling the structure of eukaryotic proteasomes. Component of the ClpAP and ClpXP complexes.

The protein localises to the cytoplasm. The enzyme catalyses Hydrolysis of proteins to small peptides in the presence of ATP and magnesium. alpha-casein is the usual test substrate. In the absence of ATP, only oligopeptides shorter than five residues are hydrolyzed (such as succinyl-Leu-Tyr-|-NHMec, and Leu-Tyr-Leu-|-Tyr-Trp, in which cleavage of the -Tyr-|-Leu- and -Tyr-|-Trp bonds also occurs).. Its function is as follows. Cleaves peptides in various proteins in a process that requires ATP hydrolysis. Has a chymotrypsin-like activity. Plays a major role in the degradation of misfolded proteins. This chain is ATP-dependent Clp protease proteolytic subunit, found in Salmonella paratyphi A (strain ATCC 9150 / SARB42).